The following is a 208-amino-acid chain: FMN-dependent NADH:quinone oxidoreductase (208 aa).

Residues S9, 15-17 (SVS), 96-99 (MYNF), and 140-143 (TRGG) each bind FMN.

Belongs to the azoreductase type 1 family. As to quaternary structure, homodimer. Requires FMN as cofactor.

It carries out the reaction 2 a quinone + NADH + H(+) = 2 a 1,4-benzosemiquinone + NAD(+). The catalysed reaction is N,N-dimethyl-1,4-phenylenediamine + anthranilate + 2 NAD(+) = 2-(4-dimethylaminophenyl)diazenylbenzoate + 2 NADH + 2 H(+). Its function is as follows. Quinone reductase that provides resistance to thiol-specific stress caused by electrophilic quinones. Functionally, also exhibits azoreductase activity. Catalyzes the reductive cleavage of the azo bond in aromatic azo compounds to the corresponding amines. The chain is FMN-dependent NADH:quinone oxidoreductase from Azospirillum brasilense.